A 162-amino-acid polypeptide reads, in one-letter code: Protein SLM4 (162 aa).

The chain crosses the membrane as a helical span at residues Leu-127–Ile-144.

Component of the GSE complex composed of GTR1, GTR2, SLM4, MEH1 and LTV1. Component of the EGO complex, at least composed of GTR2, SLM4 and MEH1.

It is found in the vacuole membrane. Component of the GSE complex, a GTPase complex required for intracellular sorting of GAP1 out of the endosome. Component of the EGO complex, a complex involved in the regulation of microautophagy. This Saccharomyces cerevisiae (strain ATCC 204508 / S288c) (Baker's yeast) protein is Protein SLM4 (SLM4).